A 369-amino-acid polypeptide reads, in one-letter code: tRNA(Met) cytidine acetate ligase (369 aa).

ATP-binding positions include 7–20, glycine 96, asparagine 152, and arginine 175; that span reads VAEFNPFHNGHKYL.

Belongs to the TmcAL family.

It is found in the cytoplasm. The catalysed reaction is cytidine(34) in elongator tRNA(Met) + acetate + ATP = N(4)-acetylcytidine(34) in elongator tRNA(Met) + AMP + diphosphate. Functionally, catalyzes the formation of N(4)-acetylcytidine (ac(4)C) at the wobble position of elongator tRNA(Met), using acetate and ATP as substrates. First activates an acetate ion to form acetyladenylate (Ac-AMP) and then transfers the acetyl group to tRNA to form ac(4)C34. The polypeptide is tRNA(Met) cytidine acetate ligase (Streptococcus agalactiae serotype III (strain NEM316)).